A 338-amino-acid polypeptide reads, in one-letter code: Sporulation protein YdcC (338 aa).

Residues Phe-8–Gly-25 traverse the membrane as a helical segment.

It is found in the cell membrane. Its function is as follows. required for efficient sporulation. In Bacillus subtilis (strain 168), this protein is Sporulation protein YdcC (ydcC).